The sequence spans 442 residues: Endothelin receptor type B (442 aa).

An N-terminal signal peptide occupies residues 1 to 26 (MQPPPSLCGRALVALVLACGLSRIWG). At 27 to 101 (EERGFPPDRA…GPIEIKETFK (75 aa)) the chain is on the extracellular side. A glycan (N-linked (GlcNAc...) asparagine) is linked at N59. A disordered region spans residues 69–88 (AEVPKGDRTAGSPPRTISPP). The chain crosses the membrane as a helical span at residues 102 to 126 (YINTVVSCLVFVLGIIGNSTLLRII). Residues 127–137 (YKNKCMRNGPN) are Cytoplasmic-facing. Residues 138-163 (ILIASLALGDLLHIVIDIPINVYKLL) form a helical membrane-spanning segment. Residues 164–175 (AEDWPFGAEMCK) lie on the Extracellular side of the membrane. Cysteines 174 and 255 form a disulfide. Residues 176-197 (LVPFIQKASVGITVLSLCALSI) traverse the membrane as a helical segment. Topologically, residues 198 to 218 (DRYRAVASWSRIKGIGVPKWT) are cytoplasmic. A helical transmembrane segment spans residues 219–243 (AVEIVLIWVVSVVLAVPEAIGFDII). At 244-271 (TMDYKGSYLRICLLHPVQKTAFMQFYKT) the chain is on the extracellular side. The chain crosses the membrane as a helical span at residues 272–296 (AKDWWLFSFYFCLPLAITAFFYTLM). Topologically, residues 297–324 (TCEMLRKKSGMQIALNDHLKQRREVAKT) are cytoplasmic. Position 305 is a phosphoserine (S305). The chain crosses the membrane as a helical span at residues 325 to 350 (VFCLVLVFALCWLPLHLSRILKLTLY). At 351-362 (NQNDPNRCELLS) the chain is on the extracellular side. The chain crosses the membrane as a helical span at residues 363 to 389 (FLLVLDYIGINMASLNSCINPIALYLV). The Cytoplasmic segment spans residues 390-442 (SKRFKNCFKSCLCCWCQSFEEKQSLEEKQSCLKFKANDHGYDNFRSSNKYSSS). S-palmitoyl cysteine attachment occurs at residues C402, C403, and C405. A Phosphoserine modification is found at S419. Residue Y439 is modified to Phosphotyrosine. S440, S441, and S442 each carry phosphoserine.

This sequence belongs to the G-protein coupled receptor 1 family. Endothelin receptor subfamily. EDNRB sub-subfamily. In terms of processing, palmitoylation of Cys-402 was confirmed by the palmitoylation of Cys-402 in a deletion mutant lacking both Cys-403 and Cys-405. Expressed in placental stem villi vessels, but not in cultured placental villi smooth muscle cells.

It localises to the cell membrane. Its function is as follows. Non-specific receptor for endothelin 1, 2, and 3. Mediates its action by association with G proteins that activate a phosphatidylinositol-calcium second messenger system. The sequence is that of Endothelin receptor type B from Homo sapiens (Human).